Consider the following 607-residue polypeptide: Potassium transporter KimA (607 aa).

Residues Met1–Leu30 are Cytoplasmic-facing. A helical transmembrane segment spans residues Ala31–Leu49. Asp36 and Tyr43 together coordinate K(+). Residues Ile50–Tyr62 are Extracellular-facing. Residues Ser63 to Ile84 form a helical membrane-spanning segment. Topologically, residues Ile85–Lys105 are cytoplasmic. The helical transmembrane segment at Pro106 to Thr134 threads the bilayer. K(+) is bound by residues Asp117 and Ser125. Topologically, residues Ser135 to Asp142 are extracellular. Residues Tyr143–Gly162 traverse the membrane as a helical segment. Residues Leu163–Ser166 are Cytoplasmic-facing. The helical transmembrane segment at Ala167 to Phe190 threads the bilayer. Topologically, residues Lys191 to Thr214 are extracellular. A helical transmembrane segment spans residues Leu215–Ala238. The Cytoplasmic segment spans residues Ile239–Asn249. Residues Ala250 to Leu271 form a helical membrane-spanning segment. The Extracellular portion of the chain corresponds to Ala272 to Val298. A helical membrane pass occupies residues Phe299–Pro323. Topologically, residues Gln324–Gly347 are cytoplasmic. The helical transmembrane segment at Phe348 to Phe366 threads the bilayer. At Gly367–His372 the chain is on the extracellular side. Residues Leu373–Cys393 traverse the membrane as a helical segment. Over Met394–Ile405 the chain is Cytoplasmic. Residues Gly406–Thr428 traverse the membrane as a helical segment. The Extracellular segment spans residues Lys429–Asn431. Residues Val432–Phe447 form a helical membrane-spanning segment. The Cytoplasmic segment spans residues Phe448–Lys607.

It belongs to the amino acid-polyamine-organocation (APC) superfamily. Homodimer.

The protein resides in the cell membrane. It carries out the reaction K(+)(in) + H(+)(in) = K(+)(out) + H(+)(out). With respect to regulation, potassium uptake increases at lower external pH and is abolished by the proton ionophore carbonyl cyanide m-chlorophenylhydrazone (CCCP). Binds cyclic di-AMP (c-di-AMP), which inhibits the potassium transport activity. In terms of biological role, high-affinity potassium transporter. Functions as a K(+)/H(+) symporter. In Bacillus subtilis (strain 168), this protein is Potassium transporter KimA.